Here is a 205-residue protein sequence, read N- to C-terminus: Meiotic nuclear division protein 1 homolog (205 aa).

N-acetylserine is present on serine 2. The stretch at 83–173 (KRKLEALNSQ…EAANRWTDNI (91 aa)) forms a coiled coil.

Belongs to the MND1 family. As to quaternary structure, heterodimer with PSMC3IP/HOP2. MND1-PSMC3IP interacts with DMC1 and RAD51 and binds to ssDNA and dsDNA showing no preference for either form of DNA.

The protein resides in the nucleus. In terms of biological role, required for proper homologous chromosome pairing and efficient cross-over and intragenic recombination during meiosis. Stimulates both DMC1- and RAD51-mediated homologous strand assimilation, which is required for the resolution of meiotic double-strand breaks. The polypeptide is Meiotic nuclear division protein 1 homolog (Mus musculus (Mouse)).